Consider the following 242-residue polypeptide: Myogenic factor 6 (242 aa).

A disordered region spans residues 31 to 63; sequence SPLYPGSDGTLSPCQDQMPQEAGSDSSGEEHVL. Residues 39–56 are compositionally biased toward polar residues; sequence GTLSPCQDQMPQEAGSDS. The bHLH domain occupies 93-144; the sequence is DRRKAATLRERRRLKKINEAFEALKRRTVANPNQRLPKVEILRSAISYIERL.

In terms of assembly, efficient DNA binding requires dimerization with another bHLH protein. Interacts with CSRP3. Skeletal muscle.

It localises to the nucleus. Its function is as follows. Involved in muscle differentiation (myogenic factor). Induces fibroblasts to differentiate into myoblasts. Probable sequence specific DNA-binding protein. This Mus musculus (Mouse) protein is Myogenic factor 6 (Myf6).